Reading from the N-terminus, the 579-residue chain is Suppressor of cytokine signaling 7 (579 aa).

Disordered regions lie at residues 1–25 (MVFR…GPSE), 89–270 (PPPP…RTQS), and 295–315 (QRGL…RSLS). 3 stretches are compositionally biased toward pro residues: residues 89 to 99 (PPPPQPPPPAA), 155 to 165 (PPGPELPPVPF), and 185 to 196 (QPPPPPPPPGPL). Residues 124–492 (AESLETNSCS…GKFLYFLRSR (369 aa)) form a mediates interaction with SORBS3 region. A compositionally biased stretch (basic residues) spans 206 to 217 (GSFKIRLSRLFR). Over residues 301-311 (PHPPTPPPPPR) the composition is skewed to pro residues. The SH2 domain occupies 398–507 (WYWGPMNWED…PTPVQLLYPV (110 aa)). An SOCS box domain is found at 502–552 (QLLYPVSRFSNVKSLQHLCRFRIRQLVRIDHIPDLPLPKPLISYIRKFYYY).

In terms of assembly, substrate-recognition component of the ECS(SOCS7) complex, composed of SOCS7, CUL5, ELOB, ELOC and RNF7/RBX2. Interacts, via the third proline-rich region, with the second SH3 domain of the adapter protein NCK1. Also interacts with GRB2, INSR, PLCG1, SORBS3/vinexin, and phosphorylated STAT3 and STAT5. Interacts with SEPT6. Interacts with phosphorylated IRS4 and PIK3R1. Widely expressed with higher expression in brain and testis where it is expressed by spermatocytes and early spermatids. Also significantly expressed in spleen, skeletal muscle and kidney.

The protein resides in the cytoplasm. It localises to the nucleus. It is found in the cell membrane. It functions in the pathway protein modification; protein ubiquitination. In terms of biological role, substrate-recognition component of a cullin-5-RING E3 ubiquitin-protein ligase complex (ECS complex, also named CRL5 complex), which mediates the ubiquitination and subsequent proteasomal degradation of target proteins, such as DAB1 and IRS1. Specifically recognizes and binds phosphorylated proteins via its SH2 domain, promoting their ubiquitination. The ECS(SOCS7) complex acts as a key regulator of reelin signaling by mediating ubiquitination and degradation of phosphorylated DAB1 in the cortical plate of the developing cerebral cortex, thereby regulating neuron positioning during cortex development. Functions in insulin signaling and glucose homeostasis through IRS1 ubiquitination and subsequent proteasomal degradation. Also inhibits prolactin, growth hormone and leptin signaling by preventing STAT3 and STAT5 activation, sequestering them in the cytoplasm and reducing their binding to DNA. This chain is Suppressor of cytokine signaling 7, found in Mus musculus (Mouse).